The sequence spans 318 residues: MGGVIKNISTFVLIVEFIIGNLGNSFIALVNCIDWVKRRKISLVDQLLTALAISRISLVWLIFGSWCVSAFFPALFATEKMFRMLTNIWAVTNHFSVWLATGLGTFYFLKIANFSNSIFIYLKWRVKKVVLVLLLVTSVFLFLNIALINIHINASINGYGGNKTCSSDSNDFTRFSSLIALTSSVFIFIPFILSLAIFLLLTFSLWKHCKKMQHTVKASGDASTKAHRGVMQTVIAFLLLYPIFSLSFFIAVWTSGWLEENLIILSQVMGMAYPSCHSCILILGNKKLRQASLSVLWWLKYRFKDGEPSGHKGFRESS.

Residues 1 to 7 (MGGVIKN) are Extracellular-facing. A helical transmembrane segment spans residues 8–28 (ISTFVLIVEFIIGNLGNSFIA). The Cytoplasmic segment spans residues 29–55 (LVNCIDWVKRRKISLVDQLLTALAISR). Residues 56–76 (ISLVWLIFGSWCVSAFFPALF) form a helical membrane-spanning segment. Residues 77-87 (ATEKMFRMLTN) lie on the Extracellular side of the membrane. Cholesterol-binding residues include Thr86 and Trp89. The chain crosses the membrane as a helical span at residues 88–108 (IWAVTNHFSVWLATGLGTFYF). The Cytoplasmic portion of the chain corresponds to 109-129 (LKIANFSNSIFIYLKWRVKKV). Residues 130–150 (VLVLLLVTSVFLFLNIALINI) form a helical membrane-spanning segment. Over 151-184 (HINASINGYGGNKTCSSDSNDFTRFSSLIALTSS) the chain is Extracellular. Asn153 and Asn162 each carry an N-linked (GlcNAc...) asparagine glycan. Ala180 provides a ligand contact to cholesterol. A helical transmembrane segment spans residues 185–205 (VFIFIPFILSLAIFLLLTFSL). Residues 206–232 (WKHCKKMQHTVKASGDASTKAHRGVMQ) are Cytoplasmic-facing. The helical transmembrane segment at 233-253 (TVIAFLLLYPIFSLSFFIAVW) threads the bilayer. Residues 254-261 (TSGWLEEN) lie on the Extracellular side of the membrane. The chain crosses the membrane as a helical span at residues 262-282 (LIILSQVMGMAYPSCHSCILI). Leu265 and Val268 together coordinate cholesterol. Residues 283 to 317 (LGNKKLRQASLSVLWWLKYRFKDGEPSGHKGFRES) lie on the Cytoplasmic side of the membrane.

It belongs to the G-protein coupled receptor T2R family. In terms of assembly, core component of the TAS2R14-GNAI1 complex, consisting of TAS2R14, GNAI1, GNB1 and GNG2; within the complex interacts with GNAI1. Core component of the TAS2R14-GNAT3 complex, consisting of TAS2R14, GNAT3, GNB1 and GNG2; within the complex interacts with GNAT3. Core component of the TAS2R14-GNAS2 complex, consisting of TAS2R14, GNAS2, GNB1 and GNG2; within the complex interacts with GNAS2.

It localises to the membrane. The enzyme catalyses Ca(2+)(in) = Ca(2+)(out). The catalysed reaction is 3',5'-cyclic AMP(in) = 3',5'-cyclic AMP(out). With respect to regulation, basal activity is enhanced by binding to bitter tastants, such as flufenamic acid and aristolochic acid. Regulated by cholesterol in a concentration-dependent manner. In terms of biological role, gustducin-linked G-protein coupled receptor that plays a role in the perception of bitterness. The activity of this receptor stimulates GNAT3, activating the gustducin G-protein pathway. Likely plays a role in sensing the chemical composition of the gastrointestinal content and other extra-oral tissues via the inhibitory G-protein pathways. The protein is Taste receptor type 2 member 14 (TAS2R14) of Pongo pygmaeus (Bornean orangutan).